The chain runs to 91 residues: RNA-binding protein Hfq (91 aa).

The Sm domain occupies D9–V68.

It belongs to the Hfq family. As to quaternary structure, homohexamer.

RNA chaperone that binds small regulatory RNA (sRNAs) and mRNAs to facilitate mRNA translational regulation in response to envelope stress, environmental stress and changes in metabolite concentrations. Also binds with high specificity to tRNAs. The polypeptide is RNA-binding protein Hfq (Stenotrophomonas maltophilia (strain K279a)).